The following is a 126-amino-acid chain: Glycerol dehydrogenase small subunit (126 aa).

4 consecutive transmembrane segments (helical) span residues 13–33 (WLTLLLGVIVLLVGLFFVIGG), 41–61 (GSTYYVLCGILLVASGVFMLM), 67–87 (AFLYLGALAYTWVWSFWEVGF), and 92–112 (LLPRAFGPTILGILVALTIPV).

Its subcellular location is the cell membrane. The enzyme catalyses glycerol + A = dihydroxyacetone + AH2. Its function is as follows. Catalyzes the oxidation of glycerol to glycerone. Also acts, more slowly, on a number of other polyols including D-sorbitol, D-arabinitol, D-mannitol, meso-erythritol, adonitol and propylene glycol. The chain is Glycerol dehydrogenase small subunit (sldB) from Gluconobacter thailandicus.